Reading from the N-terminus, the 359-residue chain is (2E,6E)-farnesyl diphosphate synthase (359 aa).

The disordered stretch occupies residues 1–21 (MRGTDEKYGLPPQPDSDRMTR). 3 residues coordinate isopentenyl diphosphate: lysine 73, arginine 76, and histidine 105. Positions 112 and 116 each coordinate Mg(2+). Residues 112 to 116 (DDLMD) carry the DDXXD motif motif. Arginine 121 provides a ligand contact to (2E)-geranyl diphosphate. Arginine 122 provides a ligand contact to isopentenyl diphosphate. (2E)-geranyl diphosphate-binding residues include lysine 201, threonine 202, and glutamine 239. The short motif at 242-246 (DDLLG) is the DDXXD motif element. (2E)-geranyl diphosphate contacts are provided by lysine 256 and lysine 266.

It belongs to the FPP/GGPP synthase family. Mg(2+) serves as cofactor.

It localises to the cytoplasm. It carries out the reaction isopentenyl diphosphate + (2E)-geranyl diphosphate = (2E,6E)-farnesyl diphosphate + diphosphate. Its pathway is isoprenoid biosynthesis; farnesyl diphosphate biosynthesis; farnesyl diphosphate from geranyl diphosphate and isopentenyl diphosphate. Functionally, catalyzes the condensation of isopentenyl pyrophosphate (IPP) with geranyl diphosphate (GPP) to yield (2E,6E)-farnesyl diphosphate (E,E-FPP). May be used for squalene and possibly sterol biosynthesis. The polypeptide is (2E,6E)-farnesyl diphosphate synthase (Mycobacterium bovis (strain ATCC BAA-935 / AF2122/97)).